Reading from the N-terminus, the 82-residue chain is Escargot/snail protein homolog (82 aa).

4 C2H2-type zinc fingers span residues 1-5 (HLQFH), 18-40 (FSCK…IRTH), 44-66 (CKCD…IRTH), and 72-82 (FSCQHCHRAFA).

This sequence belongs to the snail C2H2-type zinc-finger protein family.

The protein localises to the nucleus. The sequence is that of Escargot/snail protein homolog from Bradysia coprophila (Dark-winged fungus gnat).